Reading from the N-terminus, the 335-residue chain is Pregnancy-specific beta-1-glycoprotein 2 (335 aa).

An N-terminal signal peptide occupies residues 1–34 (MGPLSAPPCTEHIKWKGLLVTASLLNFWNLPTTA). An Ig-like V-type domain is found at 35–144 (QVTIEAQPPK…TGYFTFTLYL (110 aa)). N-linked (GlcNAc...) asparagine glycosylation is found at Asn-61, Asn-104, Asn-111, and Asn-199. Ig-like C2-type domains are found at residues 147 to 234 (PKPS…VTLN) and 239 to 317 (PDLP…TSLT). 2 cysteine pairs are disulfide-bonded: Cys-169–Cys-217 and Cys-261–Cys-301.

Belongs to the immunoglobulin superfamily. CEA family.

The protein localises to the secreted. The sequence is that of Pregnancy-specific beta-1-glycoprotein 2 (PSG2) from Homo sapiens (Human).